An 802-amino-acid polypeptide reads, in one-letter code: Copper-exporting P-type ATPase (802 aa).

HMA domains lie at 5 to 70 and 72 to 138; these read KKTT…YGVT and ETVE…YDAS. 4 residues coordinate Cu(+): Cys16, Cys19, Cys83, and Cys86. 6 helical membrane passes run 161–181, 192–212, 224–244, 256–276, 411–431, and 438–458; these read LIIS…HLFN, WFQF…FYVG, MDVL…YEMV, LYFE…YLEA, YFVP…ITLV, and PALV…LGLA. Asp495 functions as the 4-aspartylphosphate intermediate in the catalytic mechanism. Mg(2+) is bound by residues Asp690 and Asp694. The next 2 membrane-spanning stretches (helical) occupy residues 748–767 and 771–790; these read LFWA…LGLL and VAGA…ALRL.

It belongs to the cation transport ATPase (P-type) (TC 3.A.3) family. Type IB subfamily.

Its subcellular location is the cell membrane. The catalysed reaction is Cu(+)(in) + ATP + H2O = Cu(+)(out) + ADP + phosphate + H(+). Its function is as follows. Involved in copper export. The polypeptide is Copper-exporting P-type ATPase (copA) (Staphylococcus aureus (strain N315)).